A 329-amino-acid polypeptide reads, in one-letter code: 4-hydroxythreonine-4-phosphate dehydrogenase (329 aa).

His-136 and Thr-137 together coordinate substrate. The a divalent metal cation site is built by His-166, His-211, and His-266. The substrate site is built by Lys-274, Asn-283, and Arg-292.

The protein belongs to the PdxA family. Homodimer. The cofactor is Zn(2+). Mg(2+) is required as a cofactor. Co(2+) serves as cofactor.

The protein resides in the cytoplasm. The enzyme catalyses 4-(phosphooxy)-L-threonine + NAD(+) = 3-amino-2-oxopropyl phosphate + CO2 + NADH. It functions in the pathway cofactor biosynthesis; pyridoxine 5'-phosphate biosynthesis; pyridoxine 5'-phosphate from D-erythrose 4-phosphate: step 4/5. In terms of biological role, catalyzes the NAD(P)-dependent oxidation of 4-(phosphooxy)-L-threonine (HTP) into 2-amino-3-oxo-4-(phosphooxy)butyric acid which spontaneously decarboxylates to form 3-amino-2-oxopropyl phosphate (AHAP). This chain is 4-hydroxythreonine-4-phosphate dehydrogenase, found in Pseudomonas syringae pv. tomato (strain ATCC BAA-871 / DC3000).